The following is a 485-amino-acid chain: Aspartyl/glutamyl-tRNA(Asn/Gln) amidotransferase subunit B (485 aa).

This sequence belongs to the GatB/GatE family. GatB subfamily. As to quaternary structure, heterotrimer of A, B and C subunits.

The catalysed reaction is L-glutamyl-tRNA(Gln) + L-glutamine + ATP + H2O = L-glutaminyl-tRNA(Gln) + L-glutamate + ADP + phosphate + H(+). It carries out the reaction L-aspartyl-tRNA(Asn) + L-glutamine + ATP + H2O = L-asparaginyl-tRNA(Asn) + L-glutamate + ADP + phosphate + 2 H(+). In terms of biological role, allows the formation of correctly charged Asn-tRNA(Asn) or Gln-tRNA(Gln) through the transamidation of misacylated Asp-tRNA(Asn) or Glu-tRNA(Gln) in organisms which lack either or both of asparaginyl-tRNA or glutaminyl-tRNA synthetases. The reaction takes place in the presence of glutamine and ATP through an activated phospho-Asp-tRNA(Asn) or phospho-Glu-tRNA(Gln). This is Aspartyl/glutamyl-tRNA(Asn/Gln) amidotransferase subunit B from Cupriavidus pinatubonensis (strain JMP 134 / LMG 1197) (Cupriavidus necator (strain JMP 134)).